A 250-amino-acid chain; its full sequence is Large ribosomal subunit protein uL29m (250 aa).

Lysine 144 is modified (N6-acetyllysine).

This sequence belongs to the universal ribosomal protein uL29 family. In terms of assembly, component of the mitochondrial large ribosomal subunit (mt-LSU). Mature mammalian 55S mitochondrial ribosomes consist of a small (28S) and a large (39S) subunit. The 28S small subunit contains a 12S ribosomal RNA (12S mt-rRNA) and 30 different proteins. The 39S large subunit contains a 16S rRNA (16S mt-rRNA), a copy of mitochondrial valine transfer RNA (mt-tRNA(Val)), which plays an integral structural role, and 52 different proteins.

It is found in the mitochondrion. The chain is Large ribosomal subunit protein uL29m (MRPL47) from Homo sapiens (Human).